A 332-amino-acid polypeptide reads, in one-letter code: Cytoplasmic phosphatidylinositol transfer protein 1 (332 aa).

A phosphoserine mark is found at serine 119, serine 270, and serine 274. Positions 267-285 (SVRSAPSSAPSTPLSTDAP) are enriched in low complexity. A disordered region spans residues 267–332 (SVRSAPSSAP…SDKPCRPKSE (66 aa)). Threonine 278 carries the phosphothreonine modification. A compositionally biased stretch (basic and acidic residues) spans 322–332 (SSDKPCRPKSE).

This sequence belongs to the PtdIns transfer protein family. PI transfer class IIB subfamily. Ubiquitously expressed.

The protein resides in the cytoplasm. It catalyses the reaction a 1,2-diacyl-sn-glycero-3-phospho-(1D-myo-inositol)(in) = a 1,2-diacyl-sn-glycero-3-phospho-(1D-myo-inositol)(out). The catalysed reaction is a 1,2-diacyl-sn-glycero-3-phosphate(in) = a 1,2-diacyl-sn-glycero-3-phosphate(out). Catalyzes the transfer of phosphatidylinositol (PI) and phosphatidic acid (PA) between membranes. Binds PA derived from the phospholipase D signaling pathway and among the cellular PA species, preferably binds to the C16:0/16:1 and C16:1/18:1 PA species. Its function is as follows. Catalyzes the transfer of phosphatidylinositol between membranes. In Homo sapiens (Human), this protein is Cytoplasmic phosphatidylinositol transfer protein 1 (PITPNC1).